We begin with the raw amino-acid sequence, 417 residues long: Neuropeptide FF receptor 2 (417 aa).

Residues 1-45 (MSEKWDSNSSESWNHIWSGNDTQHHWYSDINITYVNYYLHQPQVA) are Extracellular-facing. N-linked (GlcNAc...) asparagine glycans are attached at residues Asn8, Asn20, and Asn31. Residues 46–66 (AVFISSYLLIFVLCMVGNTVV) traverse the membrane as a helical segment. Topologically, residues 67–82 (CFIVIRNRHMHTVTNF) are cytoplasmic. A helical membrane pass occupies residues 83-103 (FILNLAISDLLVGIFCMPITL). Residues 104–119 (LDNIIAGWPFGSSMCK) are Extracellular-facing. Cys118 and Cys206 are joined by a disulfide. Residues 120–140 (ISGLVQGISVAASVFTLVAIA) form a helical membrane-spanning segment. At 141–160 (VDRFRCVVYPFKPKLTVKTA) the chain is on the cytoplasmic side. The helical transmembrane segment at 161–181 (FVTIVIIWGLAIAIMTPSAIM) threads the bilayer. Over 182–217 (LHVQEEKYYRVRLSSHNKTSTVYWCREDWPRHEMRR) the chain is Extracellular. Asn198 is a glycosylation site (N-linked (GlcNAc...) asparagine). A helical membrane pass occupies residues 218–238 (IYTTVLFATIYLAPLSLIVIM). The Cytoplasmic portion of the chain corresponds to 239–274 (YARIGASLFKTAAHCTGKQRPVQWHVSKKKQKVIKM). A helical transmembrane segment spans residues 275 to 295 (LLTVALLFILSWLPLWTLMML). The Extracellular portion of the chain corresponds to 296–310 (SDYTDLSPNKLRIIN). A helical transmembrane segment spans residues 311 to 331 (IYIYPFAHWLAFCNSSVNPII). At 332-417 (YGFFNENFRN…MGEATNSTVA (86 aa)) the chain is on the cytoplasmic side. The tract at residues 382-401 (SQNPGGENLGCGKSADNPTQ) is disordered.

Belongs to the G-protein coupled receptor 1 family.

The protein resides in the cell membrane. Receptor for NPAF (A-18-F-amide) and NPFF (F-8-F-amide) neuropeptides, also known as morphine-modulating peptides. Can also be activated by a variety of naturally occurring or synthetic FMRF-amide like ligands. This receptor mediates its action by association with G proteins that activate a phosphatidylinositol-calcium second messenger system. This Mus musculus (Mouse) protein is Neuropeptide FF receptor 2 (Npffr2).